Consider the following 333-residue polypeptide: Biotin synthase (333 aa).

The region spanning 40–269 is the Radical SAM core domain; that stretch reads YRVQLASLLS…HARVRLSAGR (230 aa). [4Fe-4S] cluster is bound by residues Cys-55, Cys-59, and Cys-62. Cys-100, Cys-132, Cys-192, and Arg-264 together coordinate [2Fe-2S] cluster.

This sequence belongs to the radical SAM superfamily. Biotin synthase family. Homodimer. It depends on [4Fe-4S] cluster as a cofactor. [2Fe-2S] cluster is required as a cofactor.

The catalysed reaction is (4R,5S)-dethiobiotin + (sulfur carrier)-SH + 2 reduced [2Fe-2S]-[ferredoxin] + 2 S-adenosyl-L-methionine = (sulfur carrier)-H + biotin + 2 5'-deoxyadenosine + 2 L-methionine + 2 oxidized [2Fe-2S]-[ferredoxin]. The protein operates within cofactor biosynthesis; biotin biosynthesis; biotin from 7,8-diaminononanoate: step 2/2. Functionally, catalyzes the conversion of dethiobiotin (DTB) to biotin by the insertion of a sulfur atom into dethiobiotin via a radical-based mechanism. This is Biotin synthase from Synechococcus sp. (strain CC9902).